The chain runs to 546 residues: Plastidic glucose transporter 4 (546 aa).

The next 12 helical transmembrane spans lie at 105–125 (VLPF…HLGV), 148–168 (WIVS…GALA), 182–202 (IPLA…TMIV), 205–225 (LLAG…ISEI), 240–260 (LFIC…AANP), 265–285 (TMFG…AFSP), 345–365 (VVSV…NAVV), 381–401 (VAAS…ASSL), 410–430 (LLLT…LSFT), 441–461 (LAVV…GPVP), 477–497 (AVAL…LYFL), and 503–523 (FGIS…VLYI).

This sequence belongs to the major facilitator superfamily. Sugar transporter (TC 2.A.1.1) family.

The protein localises to the plastid. The protein resides in the chloroplast inner membrane. In terms of biological role, may be involved in the efflux of glucose towards the cytosol. This chain is Plastidic glucose transporter 4, found in Arabidopsis thaliana (Mouse-ear cress).